We begin with the raw amino-acid sequence, 223 residues long: Small ribosomal subunit protein uS3 (223 aa).

The region spanning 39–108 (IRNFVKKNSY…NILINIVEVK (70 aa)) is the KH type-2 domain.

This sequence belongs to the universal ribosomal protein uS3 family. Part of the 30S ribosomal subunit. Forms a tight complex with proteins S10 and S14.

Its function is as follows. Binds the lower part of the 30S subunit head. Binds mRNA in the 70S ribosome, positioning it for translation. The protein is Small ribosomal subunit protein uS3 of Clostridium botulinum (strain Okra / Type B1).